An 829-amino-acid chain; its full sequence is GLKEPVQPQVSCRYRCNETFSRMASGCSCDDKCTERQACCSDYEDTCVLPTQSWSCSKLRCGEKRIANVLCSCSEDCLEKKDCCTDYKTICKGETSWLKDKCASSGATQCPAGFEQSPLILFSMDGFRAGYLENWDSLMPNINKLKTCGTHAKYMRAVYPTKTFVNHYTIATGLYPESHGIIDNNIYDVNLNLNFSLSSSTARNPAWWGGQPIWHTATYQGLKAATYFWPGSEVKINGSYPTIFKNYDKSIPFEARVTEVLKWLDLPKAKRPDFFTLYIEEPDTTGHKYGPVSGEIIKALQMADRTLGMLMEGLKQRNLHNCVNLILLADHGMEEISCDRLEYMANYFDNVDFFMYEGPAPRIRSKNVPKDFYTFDSEGIVKNLTCRKPKQYFKAYLSKDLPKRLHYANNIRIDKVNLMVDQQWMAVRDKKFTRCKGGTHGYDNEFKSMQAIFLAHGPGFNEKNEVTSFENIEVYNLMCDLLKLKPAPNDGTHGSLNHLLKNPFYTPSPAKEQSSPLSCPFGPVPSPDVSGCKCSSITELEKVNQRLNLNNQAKTESEAHNLPYGRPQVLQNHSKYCLLHQAKYISAYSQDILMPLWSSYTIYRSTSTSVPPSASDCLRLDVRIPAAQSQTCSNYQPDLTITPGFLYPPNFNSSNFEQYDALITSNIVPMFKGFTRLWNYFHTTLIPKYARERDGLNVISGPIFDYNYDGHFDSYDTIKQHVSNTKIPIPTHYFVVLTSCENQINTPLNCLGPLKVLSFILPHRPDNSESCADTSPENLWVEERIQIHTARVRDVELLTGLNFYSGLKQPLPETLQLKTFLPIFVNPVN.

2 SMB domains span residues 8-51 (PQVS…VLPT) and 52-96 (QSWS…GETS). Intrachain disulfides connect Cys-12–Cys-16, Cys-12–Cys-29, Cys-16–Cys-47, Cys-27–Cys-29, Cys-27–Cys-40, Cys-33–Cys-39, Cys-40–Cys-47, Cys-56–Cys-61, Cys-56–Cys-73, Cys-61–Cys-91, Cys-71–Cys-73, Cys-71–Cys-84, Cys-77–Cys-83, Cys-84–Cys-91, Cys-102–Cys-148, and Cys-110–Cys-322. The N-linked (GlcNAc...) asparagine glycan is linked to Asn-17. Positions 36 to 38 (RQA) match the Cell attachment site motif. The a divalent metal cation site is built by Asp-125 and Thr-163. Thr-163 (AMP-threonine intermediate) is an active-site residue. N-linked (GlcNAc...) asparagine glycans are attached at residues Asn-194 and Asn-237. Lys-249 contributes to the AMP binding site. Asp-283, His-287, Asp-330, and His-331 together coordinate a divalent metal cation. Residue His-287 participates in AMP binding. Disulfide bonds link Cys-338–Cys-435, Cys-386–Cys-771, Cys-519–Cys-577, Cys-532–Cys-632, Cys-534–Cys-617, and Cys-740–Cys-750. Asn-383 carries an N-linked (GlcNAc...) asparagine glycan. His-440 contacts a divalent metal cation. N-linked (GlcNAc...) asparagine glycosylation is found at Asn-572 and Asn-652.

The protein belongs to the nucleotide pyrophosphatase/phosphodiesterase family. Monomer. A divalent metal cation serves as cofactor. In terms of processing, N-glycosylated. Glycosylation counts for an increased mass of ~9%. Contains 16 disulfide bonds. As to expression, expressed by venom gland.

The protein resides in the secreted. It carries out the reaction ADP + H2O = AMP + phosphate + H(+). In terms of biological role, hydrolyzes ADP with high activity. Shows weak or no activity on 5'-AMP, 5'-GMP, 3'-AMP, ATP, cAMP, and cGMP. Is devoid of monophosphatase and proteinase activities. Inhibits ADP-induced platelet aggregation and is cytotoxic to human keratinocytes. Kinetic parameters indicated a higher affinity for the substrate bis(p-nitrophenyl) phosphate compared to others snake venom PDEs. Is recognized by the crotalid antivenom produced by the Instituto Butantan. The sequence is that of Venom phosphodiesterase CdcPDE from Crotalus durissus collilineatus (Brazilian rattlesnake).